A 215-amino-acid chain; its full sequence is UPF0488 protein C8orf33 homolog (215 aa).

Disordered stretches follow at residues 1-72 (MLED…DEQL), 87-111 (LRTQ…RSSK), and 158-199 (CKPV…DTKP). Residues 29–39 (AKKHKKKKKKK) are compositionally biased toward basic residues. Basic and acidic residues predominate over residues 40 to 63 (AGEGKDDQQRETKTTEGETAKQET). Basic and acidic residues-rich tracts occupy residues 167–178 (ERNTQPKNKTDG) and 188–199 (TNEHTKTEDTKP).

Belongs to the UPF0488 family.

The polypeptide is UPF0488 protein C8orf33 homolog (Danio rerio (Zebrafish)).